A 250-amino-acid chain; its full sequence is Vitamin B12 import ATP-binding protein BtuD (250 aa).

One can recognise an ABC transporter domain in the interval 3-233 (LRQASVLPRL…EVLSPVFGVA (231 aa)). Residue 29-36 (GPNGAGKS) coordinates ATP.

The protein belongs to the ABC transporter superfamily. Vitamin B12 importer (TC 3.A.1.13.1) family. The complex is composed of two ATP-binding proteins (BtuD), two transmembrane proteins (BtuC) and a solute-binding protein (BtuF).

Its subcellular location is the cell inner membrane. It catalyses the reaction an R-cob(III)alamin(out) + ATP + H2O = an R-cob(III)alamin(in) + ADP + phosphate + H(+). In terms of biological role, part of the ABC transporter complex BtuCDF involved in vitamin B12 import. Responsible for energy coupling to the transport system. The chain is Vitamin B12 import ATP-binding protein BtuD from Pectobacterium atrosepticum (strain SCRI 1043 / ATCC BAA-672) (Erwinia carotovora subsp. atroseptica).